The following is a 218-amino-acid chain: Histidine biosynthesis bifunctional protein HisIE (218 aa).

Residues 1 to 131 (MAPHQFKSKG…GDYDLPPADT (131 aa)) are phosphoribosyl-AMP cyclohydrolase. The segment at 132 to 218 (LSQVFRVVEE…VYRALQQRRR (87 aa)) is phosphoribosyl-ATP pyrophosphohydrolase.

In the N-terminal section; belongs to the PRA-CH family. This sequence in the C-terminal section; belongs to the PRA-PH family.

Its subcellular location is the cytoplasm. The enzyme catalyses 1-(5-phospho-beta-D-ribosyl)-ATP + H2O = 1-(5-phospho-beta-D-ribosyl)-5'-AMP + diphosphate + H(+). It catalyses the reaction 1-(5-phospho-beta-D-ribosyl)-5'-AMP + H2O = 1-(5-phospho-beta-D-ribosyl)-5-[(5-phospho-beta-D-ribosylamino)methylideneamino]imidazole-4-carboxamide. It participates in amino-acid biosynthesis; L-histidine biosynthesis; L-histidine from 5-phospho-alpha-D-ribose 1-diphosphate: step 2/9. The protein operates within amino-acid biosynthesis; L-histidine biosynthesis; L-histidine from 5-phospho-alpha-D-ribose 1-diphosphate: step 3/9. The chain is Histidine biosynthesis bifunctional protein HisIE from Gloeobacter violaceus (strain ATCC 29082 / PCC 7421).